An 857-amino-acid chain; its full sequence is RNA-directed RNA polymerase 2a (857 aa).

The RdRp catalytic domain maps to 511–624 (KHCLEIDLSK…FSLLPPVGDP (114 aa)). The disordered stretch occupies residues 782-829 (RRCNDKRRTPTGSYGGGEEAETKISQAESTGTRSQKSQRESAFKSQTV). Over residues 804–816 (KISQAESTGTRSQ) the composition is skewed to polar residues.

It belongs to the ssRNA positive-strand viruses RNA-directed RNA polymerase family. As to quaternary structure, interacts with replication protein 1a.

It carries out the reaction RNA(n) + a ribonucleoside 5'-triphosphate = RNA(n+1) + diphosphate. RNA-dependent RNA polymerase which replicates the viral genome composed of 3 RNA segments, RNA1, RNA2 and RNA3. The polypeptide is RNA-directed RNA polymerase 2a (Cucumis sativus (Cucumber)).